The sequence spans 566 residues: Transcription factor P14E8.02 (566 aa).

The disordered stretch occupies residues 1 to 32; it reads MNISSQNVLLPSPIPSSSPMASHKKSWLSKHP. Serine 73 is subject to Phosphoserine. Residues 86-137 form the FHA domain; that stretch reads NKIGRSSQQCDHVLSTVDKAISRVHAIVTCTQDRMIIECVGWNGMIVSDKMR. Disordered regions lie at residues 191 to 217, 269 to 291, 312 to 334, and 364 to 437; these read EENR…SQDY, DCSK…LLNG, ESDD…IEES, and FTNH…TKEN. Over residues 314–330 the composition is skewed to acidic residues; the sequence is DDLDKNEEISEGEEYTP. 2 stretches are compositionally biased toward polar residues: residues 373–383 and 414–428; these read NSNITTSNDSP and DENT…PSSH. Phosphoserine is present on residues serine 379 and serine 382.

Belongs to the PLM2/TOS4 family.

Its subcellular location is the nucleus. Functionally, probable transcriptional regulatory protein Required for G1/S progression. The polypeptide is Transcription factor P14E8.02 (Schizosaccharomyces pombe (strain 972 / ATCC 24843) (Fission yeast)).